Reading from the N-terminus, the 196-residue chain is Putative archaetidylserine decarboxylase proenzyme (196 aa).

Catalysis depends on serine 164, which acts as the Schiff-base intermediate with substrate; via pyruvic acid. Residue serine 164 is modified to Pyruvic acid (Ser); by autocatalysis.

The protein belongs to the phosphatidylserine decarboxylase family. PSD-A subfamily. In terms of assembly, heterodimer of a large membrane-associated beta subunit and a small pyruvoyl-containing alpha subunit. Requires pyruvate as cofactor. Post-translationally, is synthesized initially as an inactive proenzyme. Formation of the active enzyme involves a self-maturation process in which the active site pyruvoyl group is generated from an internal serine residue via an autocatalytic post-translational modification. Two non-identical subunits are generated from the proenzyme in this reaction, and the pyruvate is formed at the N-terminus of the alpha chain, which is derived from the carboxyl end of the proenzyme. The post-translation cleavage follows an unusual pathway, termed non-hydrolytic serinolysis, in which the side chain hydroxyl group of the serine supplies its oxygen atom to form the C-terminus of the beta chain, while the remainder of the serine residue undergoes an oxidative deamination to produce ammonia and the pyruvoyl prosthetic group on the alpha chain.

The protein resides in the cell membrane. It carries out the reaction archaetidylserine + H(+) = archaetidylethanolamine + CO2. In terms of biological role, catalyzes the formation of archaetidylethanolamine (PtdEtn) from archaetidylserine (PtdSer). This chain is Putative archaetidylserine decarboxylase proenzyme, found in Halobacterium salinarum (strain ATCC 700922 / JCM 11081 / NRC-1) (Halobacterium halobium).